The primary structure comprises 445 residues: Phosphoglucosamine mutase (445 aa).

The Phosphoserine intermediate role is filled by Ser102. 4 residues coordinate Mg(2+): Ser102, Asp241, Asp243, and Asp245. Ser102 carries the phosphoserine modification.

This sequence belongs to the phosphohexose mutase family. Mg(2+) serves as cofactor. Activated by phosphorylation.

It catalyses the reaction alpha-D-glucosamine 1-phosphate = D-glucosamine 6-phosphate. In terms of biological role, catalyzes the conversion of glucosamine-6-phosphate to glucosamine-1-phosphate. The sequence is that of Phosphoglucosamine mutase from Rhodococcus opacus (strain B4).